The chain runs to 265 residues: Undecaprenyl-diphosphatase (265 aa).

The next 8 helical transmembrane spans lie at 1–21 (MDIF…FLPI), 39–59 (QGVG…VLYF), 84–104 (ALAW…LALL), 114–134 (ASVI…ADWL), 144–164 (LNWK…VPGT), 187–207 (FSFL…LLEV), 218–238 (GFLI…HFFL), and 244–264 (VGMW…YAVL).

It belongs to the UppP family.

The protein localises to the cell inner membrane. It carries out the reaction di-trans,octa-cis-undecaprenyl diphosphate + H2O = di-trans,octa-cis-undecaprenyl phosphate + phosphate + H(+). In terms of biological role, catalyzes the dephosphorylation of undecaprenyl diphosphate (UPP). Confers resistance to bacitracin. In Marinobacter nauticus (strain ATCC 700491 / DSM 11845 / VT8) (Marinobacter aquaeolei), this protein is Undecaprenyl-diphosphatase.